Consider the following 163-residue polypeptide: Peptide methionine sulfoxide reductase MsrA (163 aa).

Cys10 is an active-site residue.

This sequence belongs to the MsrA Met sulfoxide reductase family.

It carries out the reaction L-methionyl-[protein] + [thioredoxin]-disulfide + H2O = L-methionyl-(S)-S-oxide-[protein] + [thioredoxin]-dithiol. It catalyses the reaction [thioredoxin]-disulfide + L-methionine + H2O = L-methionine (S)-S-oxide + [thioredoxin]-dithiol. In terms of biological role, has an important function as a repair enzyme for proteins that have been inactivated by oxidation. Catalyzes the reversible oxidation-reduction of methionine sulfoxide in proteins to methionine. This is Peptide methionine sulfoxide reductase MsrA from Ruthia magnifica subsp. Calyptogena magnifica.